A 336-amino-acid polypeptide reads, in one-letter code: Nitrilase (336 aa).

Residues 5 to 278 (LKVACVQAAP…EGLLYATLDP (274 aa)) form the CN hydrolase domain. Glu45 serves as the catalytic Proton acceptor. The active-site Proton donor is the Lys127. Cys161 serves as the catalytic Nucleophile.

This sequence belongs to the carbon-nitrogen hydrolase superfamily. Nitrilase family.

The catalysed reaction is a nitrile + 2 H2O = a carboxylate + NH4(+). It carries out the reaction (indol-3-yl)acetonitrile + 2 H2O = (indol-3-yl)acetate + NH4(+). The enzyme catalyses phenylpropanonitrile + 2 H2O = 3-phenylpropanoate + NH4(+). Its function is as follows. Arylacetonitrilase which is capable of hydrolyzing indole-3-acetonitrile (IAN) to the plant hormone indole-3-acetate (IAA), and allows the plant pathogenic bacterium to use IAN as a sole nitrogen source. Is also able to hydrolyze phenylpropionitrile (PPN), allowing the use of this compound as a sole nitrogen source. This enzyme may represent an additional mechanism for IAA biosynthesis or may be used to degrade and assimilate aldoximes and nitriles produced during host plant secondary metabolism. This chain is Nitrilase, found in Pseudomonas syringae pv. syringae (strain B728a).